Reading from the N-terminus, the 62-residue chain is Conotoxin TsMLCL-02 (62 aa).

Residues 1–19 form the signal peptide; it reads MLCLPVFIILLLLASPAAP. A propeptide spanning residues 20 to 54 is cleaved from the precursor; it reads NPLERRIQSDLIRAALEDADMKTEKGILSSIMGTL.

It belongs to the conotoxin T superfamily. Expressed by the venom duct.

The protein resides in the secreted. In Conus tessulatus (Tessellate cone), this protein is Conotoxin TsMLCL-02.